The following is a 336-amino-acid chain: MSKNDISAYMSEWMRDREESPIVMSSRIRLARNLENHVHPLMFLSEQDGFRIINEVQDALPDLAVQRLDAMDQQSKYKLVAKHLISPELIRQPASAVLLNEDESLSIMVNEEDHLRIQAMGNDLSLSSLYEKASEIDDKLDSELDVSFDETLGYLTTCPTNIGTGMRASVMLHLPGLTIMKRMNRIAQTINRFGFTIRGIYGEGSHVYGHIYQISNQLTLGKTEEDIIESLSEVVQQIINEEMQIRERLNRHNYTETLDRVYRSLGILKYSRLISMEEASLRLSEVKLGIDLEYIELEDFKFNELMVAIQSPFLLDDEDDRTVNEKRADILREHIN.

Residues 22–245 (IVMSSRIRLA…QQIINEEMQI (224 aa)) enclose the Phosphagen kinase C-terminal domain. ATP-binding positions include 25–29 (SSRIR), H83, R116, 167–171 (RASVM), and 198–203 (RGIYGE).

It belongs to the ATP:guanido phosphotransferase family.

It carries out the reaction L-arginyl-[protein] + ATP = N(omega)-phospho-L-arginyl-[protein] + ADP + H(+). Catalyzes the specific phosphorylation of arginine residues in proteins. This Staphylococcus saprophyticus subsp. saprophyticus (strain ATCC 15305 / DSM 20229 / NCIMB 8711 / NCTC 7292 / S-41) protein is Protein-arginine kinase.